The following is a 384-amino-acid chain: Nodal homolog 2-B (384 aa).

Positions 1 to 18 (MASLGAILLFAIASLMHG) are cleaved as a signal peptide. The propeptide occupies 19–283 (RPIHSDRKGA…RVADARRHRR (265 aa)). 3 N-linked (GlcNAc...) asparagine glycosylation sites follow: asparagine 71, asparagine 173, and asparagine 344. Cysteines 306 and 372 form a disulfide.

Belongs to the TGF-beta family. As to quaternary structure, homodimer; disulfide-linked. Forms heterodimers with the TGF-beta family member derriere. Interacts with tsku; enhances nodal2 activity.

Its subcellular location is the secreted. Cooperation and regulatory loops of multiple nodals are essential for mesendoderm patterning in early embryos. Essential for mesoderm formation and axial patterning during embryonic development. Activates the activin-like signaling pathway to induce dorsal and ventral mesoderm in animal cap ectoderm. In addition, also dorsalizes ventral marginal zone (VMZ) tissues during gastrulation. Induces muscle actin. Appears to act as both a short-range and long-range morphogen. The unprocessed protein inhibits bmp- and wnt-signaling. The sequence is that of Nodal homolog 2-B (nodal2-b) from Xenopus laevis (African clawed frog).